A 131-amino-acid polypeptide reads, in one-letter code: Peptide methionine sulfoxide reductase MsrB (131 aa).

Residues 8–130 (LEEWRAMLDP…NSVCLDLVPR (123 aa)) enclose the MsrB domain. 4 residues coordinate Zn(2+): C47, C50, C96, and C99. Residue C119 is the Nucleophile of the active site.

It belongs to the MsrB Met sulfoxide reductase family. The cofactor is Zn(2+).

It catalyses the reaction L-methionyl-[protein] + [thioredoxin]-disulfide + H2O = L-methionyl-(R)-S-oxide-[protein] + [thioredoxin]-dithiol. The chain is Peptide methionine sulfoxide reductase MsrB from Pseudomonas fluorescens (strain Pf0-1).